Consider the following 31-residue polypeptide: Photosystem II reaction center protein T (31 aa).

The chain crosses the membrane as a helical span at residues 3-23; it reads ALVYTFLLVGTLGIIFFSIFF.

It belongs to the PsbT family. As to quaternary structure, PSII is composed of 1 copy each of membrane proteins PsbA, PsbB, PsbC, PsbD, PsbE, PsbF, PsbH, PsbI, PsbJ, PsbK, PsbL, PsbM, PsbT, PsbY, PsbZ, Psb30/Ycf12, at least 3 peripheral proteins of the oxygen-evolving complex and a large number of cofactors. It forms dimeric complexes.

The protein resides in the plastid. It localises to the chloroplast thylakoid membrane. Functionally, found at the monomer-monomer interface of the photosystem II (PS II) dimer, plays a role in assembly and dimerization of PSII. PSII is a light-driven water plastoquinone oxidoreductase, using light energy to abstract electrons from H(2)O, generating a proton gradient subsequently used for ATP formation. This Bigelowiella natans (Pedinomonas minutissima) protein is Photosystem II reaction center protein T.